The following is a 318-amino-acid chain: Olfactory receptor 52D1 (318 aa).

Residues 1-28 (MSDSNLSDNHLPDTFFLTGIPGLEAAHF) are Extracellular-facing. A glycan (N-linked (GlcNAc...) asparagine) is linked at Asn-5. Residues 29–49 (WIAIPFCAMYLVALVGNAALI) traverse the membrane as a helical segment. The Cytoplasmic segment spans residues 50-57 (LVIAMDNA). A helical membrane pass occupies residues 58–78 (LHAPMYLFLCLLSLTDLALSS). Residues 79–102 (TTVPKMLAILWLHAGEISFGGCLA) lie on the Extracellular side of the membrane. The cysteines at positions 100 and 192 are disulfide-linked. The chain crosses the membrane as a helical span at residues 103-123 (QMFCVHSIYALESSILLAMAF). Residues 124 to 142 (DRYVAICNPLRYTTILNHA) lie on the Cytoplasmic side of the membrane. Residues 143 to 163 (VIGRIGFVGLFRSVAIVSPFI) form a helical membrane-spanning segment. At 164-199 (FLLRRLPYCGHRVMTHTYCEHMGIARLACANITVNI) the chain is on the extracellular side. Residues 200–220 (VYGLTVALLAMGLDSILIAIS) form a helical membrane-spanning segment. The Cytoplasmic segment spans residues 221-240 (YGFILHAVFHLPSHDAQHKA). Residues 241–261 (LSTCGSHIGIILVFYIPAFFS) form a helical membrane-spanning segment. Residues 262–277 (FLTHRFGHHEVPKHVH) are Extracellular-facing. Residues 278 to 298 (IFLANLYVLVPPVLNPILYGA) form a helical membrane-spanning segment. Residues 299–318 (RTKEIRSRLLKLLHLGKTSI) lie on the Cytoplasmic side of the membrane.

Belongs to the G-protein coupled receptor 1 family.

Its subcellular location is the cell membrane. Odorant receptor. The protein is Olfactory receptor 52D1 (OR52D1) of Homo sapiens (Human).